Consider the following 622-residue polypeptide: Leucine-rich repeat-containing protein 70 (622 aa).

A signal peptide spans 1–31 (MCGLQFSLPCLRLFLVVTCYLLLLLHKEILG). Residues 32–60 (CSSVCQLCTGRQINCRNLGLSSIPKNFPE) form the LRRNT domain. 12 LRR repeats span residues 61–82 (STVF…ELTG), 85–106 (SLVA…AFVQ), 109–130 (HLYF…IFKG), 133–154 (NLRN…VFND), 157–178 (SVQY…TFVG), 181–202 (ALRI…GFQH), 205–226 (NLAC…AFEV), 229–250 (SLRR…AFKG), 253–274 (NLEY…GFSG), 277–298 (NLKH…TFSL), 301–322 (NLIY…TFEN), and 326–347 (SLKI…VLKP). N-linked (GlcNAc...) asparagine glycosylation occurs at asparagine 215. A glycan (N-linked (GlcNAc...) asparagine) is linked at asparagine 266. Asparagine 331 and asparagine 400 each carry an N-linked (GlcNAc...) asparagine glycan. Positions 359-406 (NPWECNCKLLGLRDWLASSAITLNIYCQNPPSMRGRALRYINITNCVT) constitute an LRRCT domain. The helical transmembrane segment at 527 to 547 (AFDILLAFFILACVLIIFLIY) threads the bilayer.

Expressed at low levels in many tissues, including smooth muscle, brain, uterus, pancreas, cartilage, adipose, spleen and testis.

The protein resides in the membrane. Renders cells highly sensitive to the activation by cytokines and lipopolysaccharide (LPS). The chain is Leucine-rich repeat-containing protein 70 (LRRC70) from Homo sapiens (Human).